The chain runs to 123 residues: Holo-[acyl-carrier-protein] synthase (123 aa).

2 residues coordinate Mg(2+): aspartate 7 and glutamate 56.

Belongs to the P-Pant transferase superfamily. AcpS family. Requires Mg(2+) as cofactor.

The protein resides in the cytoplasm. It carries out the reaction apo-[ACP] + CoA = holo-[ACP] + adenosine 3',5'-bisphosphate + H(+). Transfers the 4'-phosphopantetheine moiety from coenzyme A to a Ser of acyl-carrier-protein. The protein is Holo-[acyl-carrier-protein] synthase of Carboxydothermus hydrogenoformans (strain ATCC BAA-161 / DSM 6008 / Z-2901).